We begin with the raw amino-acid sequence, 755 residues long: MNKGWLELESDPGLFTLLVEDFGVKGVQVEEIYDLQSKCQSPVYGFIFLFKWIEERRSRRKVSTLVDETSVIDDDIVNDMFFAHQLIPNSCATHALLSVLLNCSGVELGMTLSRMKAFTKGFNPESKGYAIGNAPELAKAHNSHARPEPRHLPEKQNGISAVRTMEAFHFVSYVPIKDRLFELDGLKAYPIDHGPWGEDEEWTDKARRVIMERIGLATAGEPYHDIRFNLMAVVPDRRIKYESKLDILKRNRQIILEGLQQIREKKVIRMTQQESGQDRKQQDSSSSEDTPPVVKKEEVQETPIPSGAEQATPTEAQEGAASLPSPAGKVRSMAKPALPAGGAPPPAPLPAPSTNTIVQRLPAFLDNHNYAKSPMQEEEDLAAGVGRSRPPQPPYSDDEDDYDDEEEECSTAGVTNSRVRRKLGLRTRTMSRTAVGGVAAMEGQLALSVLAEKLKKEVQRKDALATTGSTPLNVRTEGRTGGISITSACQPSPTPSNESTDTASEIGSAFNSPLRSPARSQATTRPSSPVASHVGRVLFGEEEGLPRLDARHNRAVRDLGVLVSSTQLQLQEDGVIFALPPTEALEGLKKVGGVDKKKKEEASGPGGEEEVKEGPSVEMKAEDVKESVDVKPEKENLPTTDVENSTKPPGEKYTPKELLALLKYVEADIANYEVYLKEEVEKRKKYKIDDQRRTHNYDEFICTFISMLAQEGMLASLVEQNISVRRRQGVSIGRLHKQRKPDRRKRSRPYKAKRQ.

A UCH catalytic domain is found at 4–235 (GWLELESDPG…IRFNLMAVVP (232 aa)). Cys-91 acts as the Nucleophile in catalysis. His-169 (proton donor) is an active-site residue. Disordered regions lie at residues 270 to 354 (MTQQ…APST), 368 to 415 (HNYA…AGVT), 469 to 535 (STPL…SHVG), and 593 to 652 (GVDK…PGEK). Positions 342–351 (GAPPPAPLPA) are enriched in pro residues. The segment covering 396-409 (SDDEDDYDDEEEEC) has biased composition (acidic residues). Positions 483 to 530 (ISITSACQPSPTPSNESTDTASEIGSAFNSPLRSPARSQATTRPSSPV) are enriched in polar residues. 2 stretches are compositionally biased toward basic and acidic residues: residues 593 to 602 (GVDKKKKEEA) and 612 to 636 (KEGPSVEMKAEDVKESVDVKPEKEN). A compositionally biased stretch (polar residues) spans 637-647 (LPTTDVENSTK). Positions 696–724 (NYDEFICTFISMLAQEGMLASLVEQNISV) constitute a ULD domain. The segment at 729-755 (GVSIGRLHKQRKPDRRKRSRPYKAKRQ) is disordered. Positions 743 to 748 (RRKRSR) match the Nuclear localization signal motif.

Belongs to the peptidase C12 family. BAP1 subfamily. Component of the PR-DUB complex.

It localises to the cytoplasm. The protein resides in the nucleus. The catalysed reaction is Thiol-dependent hydrolysis of ester, thioester, amide, peptide and isopeptide bonds formed by the C-terminal Gly of ubiquitin (a 76-residue protein attached to proteins as an intracellular targeting signal).. In terms of biological role, deubiquitinating enzyme that plays a key role in chromatin by mediating deubiquitination of histone H2A. Catalytic component of the PR-DUB complex, a complex that specifically mediates deubiquitination of histone H2A monoubiquitinated at 'Lys-119' (H2AK119ub1). This Danio rerio (Zebrafish) protein is Ubiquitin carboxyl-terminal hydrolase BAP1 (bap1).